Consider the following 967-residue polypeptide: Disks large homolog 1 (967 aa).

The 61-residue stretch at Ser5–Arg65 folds into the L27 domain. One can recognise a PDZ 1 domain in the interval Asn202–Lys289. Residues Ile324 to Gln351 form a disordered region. The span at Pro330–Val339 shows a compositional bias: pro residues. PDZ domains lie at Val361–Thr448 and Pro510–Pro591. Residues Arg619–Glu690 enclose the SH3 domain. A disordered region spans residues Glu673–Ser723. The span at Ser682–Gln696 shows a compositional bias: basic residues. Over residues Val697–Leu715 the composition is skewed to polar residues. The Guanylate kinase-like domain maps to Val769–Ser955.

This sequence belongs to the MAGUK family. In terms of assembly, homooligomerizes; requires L27 domain. Interacts (via L27 domain) with ajm-1; the interaction regulates ajm-1 apical junction location. As to expression, expressed in the apical junctions in the hypodermis. Expressed in epithelial cells in the reproductive system including vulva, uterus and spermatheca.

It localises to the membrane. The protein resides in the apical cell membrane. Its subcellular location is the cell junction. It is found in the adherens junction. The protein localises to the lateral cell membrane. It localises to the cytoplasm. In terms of biological role, essential multidomain scaffolding protein required for normal development. Recruits channels, receptors and signaling molecules to discrete plasma membrane domains in polarized cells. Required for proper embryonic elongation. Acts upstream of ajm-1 and becomes localized to apical junctions independently of ajm-1. With let-413, cooperatively regulates ajm-1 localization to apical junctions and the establishment of newly formed epithelia. Plays a role in assembling the adherens junction by clustering ajm-1 and other proteins, to form electron-dense structures; may form a compartment distinct to that of hmp-1 and associated proteins. Plays a role in the directed outgrowth of seam cells, towards neighboring seam cells, during larval development. The chain is Disks large homolog 1 from Caenorhabditis elegans.